The primary structure comprises 129 residues: Histone H2A (129 aa).

Belongs to the histone H2A family. In terms of assembly, the nucleosome is a histone octamer containing two molecules each of H2A, H2B, H3 and H4 assembled in one H3-H4 heterotetramer and two H2A-H2B heterodimers. The octamer wraps approximately 147 bp of DNA.

It is found in the nucleus. It localises to the chromosome. Its function is as follows. Core component of nucleosome. Nucleosomes wrap and compact DNA into chromatin, limiting DNA accessibility to the cellular machineries which require DNA as a template. Histones thereby play a central role in transcription regulation, DNA repair, DNA replication and chromosomal stability. DNA accessibility is regulated via a complex set of post-translational modifications of histones, also called histone code, and nucleosome remodeling. This chain is Histone H2A (H2A-II), found in Chlamydomonas reinhardtii (Chlamydomonas smithii).